The primary structure comprises 1073 residues: Receptor-type guanylate cyclase gcy-23 (1073 aa).

An N-terminal signal peptide occupies residues 1-15; the sequence is MRRELFIFLLLLGEC. At 16–458 the chain is on the extracellular side; it reads ANVKVKVGHI…FRNEKCDYTT (443 aa). N-linked (GlcNAc...) asparagine glycosylation is present at N336. Residues 459 to 479 form a helical membrane-spanning segment; the sequence is LIIGGCIVLLIILLIICFFIL. The Cytoplasmic segment spans residues 480-1073; it reads SRVCENRALA…QQQNFSQLGI (594 aa). One can recognise a Protein kinase domain in the interval 508 to 808; it reads MKSMLSIGSS…RVRLNTENYL (301 aa). A coiled-coil region spans residues 813-844; the sequence is SLVDQMMRMMEQYANNLEKLVAERTGMLEEAN. The Guanylate cyclase domain occupies 878-1008; that stretch reads TVMFSDIVGF…DTVNVASRME (131 aa). The Mg(2+) site is built by D883, I884, and D927.

This sequence belongs to the adenylyl cyclase class-4/guanylyl cyclase family. In terms of tissue distribution, expressed specifically in AFD sensory neurons.

The protein resides in the cell membrane. It is found in the cell projection. The protein localises to the cilium. It catalyses the reaction GTP = 3',5'-cyclic GMP + diphosphate. Functionally, guanylate cyclase involved in the production of the second messenger cGMP. Regulates thermotaxis responses in AFD sensory neurons. May regulate AFD neuronal activity such as calcium responses to temperature gradients. The polypeptide is Receptor-type guanylate cyclase gcy-23 (Caenorhabditis elegans).